A 252-amino-acid polypeptide reads, in one-letter code: Small ribosomal subunit protein uS3 (252 aa).

A KH type-2 domain is found at 39 to 110 (IRKALMKELK…EVKINVVEIK (72 aa)). The tract at residues 218–252 (TSDEKPKFEKRDFNRSNNNRRDQAPKSHPVAKEAK) is disordered. Over residues 219–252 (SDEKPKFEKRDFNRSNNNRRDQAPKSHPVAKEAK) the composition is skewed to basic and acidic residues.

The protein belongs to the universal ribosomal protein uS3 family. In terms of assembly, part of the 30S ribosomal subunit. Forms a tight complex with proteins S10 and S14.

Its function is as follows. Binds the lower part of the 30S subunit head. Binds mRNA in the 70S ribosome, positioning it for translation. This chain is Small ribosomal subunit protein uS3, found in Spiroplasma citri.